Consider the following 385-residue polypeptide: 8-amino-7-oxononanoate synthase (385 aa).

Arginine 21 lines the substrate pocket. Pyridoxal 5'-phosphate is bound at residue 108–109 (GF). Histidine 133 lines the substrate pocket. Residues serine 179, histidine 207, and threonine 233 each contribute to the pyridoxal 5'-phosphate site. At lysine 236 the chain carries N6-(pyridoxal phosphate)lysine. A substrate-binding site is contributed by threonine 352.

This sequence belongs to the class-II pyridoxal-phosphate-dependent aminotransferase family. BioF subfamily. As to quaternary structure, homodimer. It depends on pyridoxal 5'-phosphate as a cofactor.

It carries out the reaction 6-carboxyhexanoyl-[ACP] + L-alanine + H(+) = (8S)-8-amino-7-oxononanoate + holo-[ACP] + CO2. It participates in cofactor biosynthesis; biotin biosynthesis. Functionally, catalyzes the decarboxylative condensation of pimeloyl-[acyl-carrier protein] and L-alanine to produce 8-amino-7-oxononanoate (AON), [acyl-carrier protein], and carbon dioxide. The protein is 8-amino-7-oxononanoate synthase of Salmonella dublin (strain CT_02021853).